We begin with the raw amino-acid sequence, 597 residues long: MTSPAKSSTAASSSSQRSLSAWSPLGGERFYAAARWVLIILLGVVTQFLTNGGLWPVTDEIGPLEGIFWLYVGFALVFTVLAFLQFAAGLVSISYLFDIAFISLMTFFGGERIVIFFPLYLVPLTYAAIRQSRSVSLLSGLLAAVAYMAAFIAWRRLIAPEALMTLLDYVALALRGTTLAIVPWVTGNLAERQSEFNRERVTQAQRDAEQALSEARAYRDQMRSLYRVALTLGSTANYRQVLDTLLQESQKIVPYRAGIVLLSSGQPNELYVAFGSNLAPGDLNRSLKMDTGLAAALRANTAQVITSFTQFPSLQQLGSLRTCKAAALLPLQAGMRVYGLFVVATDQTLTTDQVEMLMALANYAIVALHNAQLIYDLKEEREKLLSHEEEVRHQLARDLHDGPAQAMAVITMKAEFIKRLLERDPAQALAELDELSSIAKRTNYEVRTMLFELRPLMLETQGLKVTLEQYLDRLRAKAGNTAIVLEGTDIDKVRLGSKVEGALFNMIQESVTNAIKHAKANHIWVRLRRLNDQMLEVVIQDDGVGFDKAAVLKSYERRGSFGLLNIDERARLVGGRAEIDSTPGKGTQITIFVPIES.

5 helical membrane-spanning segments follow: residues 37–57 (VLII…LWPV), 67–87 (IFWL…LQFA), 109–129 (GGER…YAAI), 134–154 (SVSL…FIAW), and 162–182 (ALMT…LAIV). The 205-residue stretch at 393–597 (HQLARDLHDG…QITIFVPIES (205 aa)) folds into the Histidine kinase domain.

The protein localises to the cell membrane. This is an uncharacterized protein from Chloroflexus aurantiacus (strain ATCC 29366 / DSM 635 / J-10-fl).